A 374-amino-acid chain; its full sequence is Queuine tRNA-ribosyltransferase (374 aa).

The active-site Proton acceptor is aspartate 89. Residues 89-93, aspartate 143, glutamine 187, and glycine 214 each bind substrate; that span reads DSGGF. The RNA binding stretch occupies residues 245 to 251; the sequence is GVGKPED. Residue aspartate 264 is the Nucleophile of the active site. The tract at residues 269–273 is RNA binding; important for wobble base 34 recognition; the sequence is TRNAR. 4 residues coordinate Zn(2+): cysteine 302, cysteine 304, cysteine 307, and histidine 333.

It belongs to the queuine tRNA-ribosyltransferase family. Homodimer. Within each dimer, one monomer is responsible for RNA recognition and catalysis, while the other monomer binds to the replacement base PreQ1. The cofactor is Zn(2+).

The catalysed reaction is 7-aminomethyl-7-carbaguanine + guanosine(34) in tRNA = 7-aminomethyl-7-carbaguanosine(34) in tRNA + guanine. The protein operates within tRNA modification; tRNA-queuosine biosynthesis. Its function is as follows. Catalyzes the base-exchange of a guanine (G) residue with the queuine precursor 7-aminomethyl-7-deazaguanine (PreQ1) at position 34 (anticodon wobble position) in tRNAs with GU(N) anticodons (tRNA-Asp, -Asn, -His and -Tyr). Catalysis occurs through a double-displacement mechanism. The nucleophile active site attacks the C1' of nucleotide 34 to detach the guanine base from the RNA, forming a covalent enzyme-RNA intermediate. The proton acceptor active site deprotonates the incoming PreQ1, allowing a nucleophilic attack on the C1' of the ribose to form the product. After dissociation, two additional enzymatic reactions on the tRNA convert PreQ1 to queuine (Q), resulting in the hypermodified nucleoside queuosine (7-(((4,5-cis-dihydroxy-2-cyclopenten-1-yl)amino)methyl)-7-deazaguanosine). The chain is Queuine tRNA-ribosyltransferase from Psychromonas ingrahamii (strain DSM 17664 / CCUG 51855 / 37).